Reading from the N-terminus, the 203-residue chain is NADH-quinone oxidoreductase subunit C (203 aa).

This sequence belongs to the complex I 30 kDa subunit family. NDH-1 is composed of 14 different subunits. Subunits NuoB, C, D, E, F, and G constitute the peripheral sector of the complex.

It is found in the cell inner membrane. The enzyme catalyses a quinone + NADH + 5 H(+)(in) = a quinol + NAD(+) + 4 H(+)(out). Functionally, NDH-1 shuttles electrons from NADH, via FMN and iron-sulfur (Fe-S) centers, to quinones in the respiratory chain. The immediate electron acceptor for the enzyme in this species is believed to be ubiquinone. Couples the redox reaction to proton translocation (for every two electrons transferred, four hydrogen ions are translocated across the cytoplasmic membrane), and thus conserves the redox energy in a proton gradient. The polypeptide is NADH-quinone oxidoreductase subunit C (Verminephrobacter eiseniae (strain EF01-2)).